The primary structure comprises 390 residues: Magnesium-protoporphyrin IX monomethyl ester [oxidative] cyclase (390 aa).

It belongs to the AcsF family. The cofactor is Fe cation.

The catalysed reaction is Mg-protoporphyrin IX 13-monomethyl ester + 3 NADPH + 3 O2 + 2 H(+) = 3,8-divinyl protochlorophyllide a + 3 NADP(+) + 5 H2O. Its pathway is porphyrin-containing compound metabolism; chlorophyll biosynthesis (light-independent). Catalyzes the formation of the isocyclic ring in chlorophyll biosynthesis. Mediates the cyclase reaction, which results in the formation of divinylprotochlorophyllide (Pchlide) characteristic of all chlorophylls from magnesium-protoporphyrin IX 13-monomethyl ester (MgPMME). This is Magnesium-protoporphyrin IX monomethyl ester [oxidative] cyclase from Prochlorococcus marinus (strain MIT 9215).